Reading from the N-terminus, the 169-residue chain is Transcription antitermination protein NusB (169 aa).

It belongs to the NusB family.

Involved in transcription antitermination. Required for transcription of ribosomal RNA (rRNA) genes. Binds specifically to the boxA antiterminator sequence of the ribosomal RNA (rrn) operons. The protein is Transcription antitermination protein NusB of Deinococcus geothermalis (strain DSM 11300 / CIP 105573 / AG-3a).